The chain runs to 707 residues: Elongation factor G (707 aa).

The 290-residue stretch at 8-297 (ERVRNIGIAA…AVLDYLPSPL (290 aa)) folds into the tr-type G domain. GTP is bound by residues 17–24 (AHIDAGKT), 96–100 (DTPGH), and 150–153 (NKMD).

It belongs to the TRAFAC class translation factor GTPase superfamily. Classic translation factor GTPase family. EF-G/EF-2 subfamily.

It is found in the cytoplasm. Its function is as follows. Catalyzes the GTP-dependent ribosomal translocation step during translation elongation. During this step, the ribosome changes from the pre-translocational (PRE) to the post-translocational (POST) state as the newly formed A-site-bound peptidyl-tRNA and P-site-bound deacylated tRNA move to the P and E sites, respectively. Catalyzes the coordinated movement of the two tRNA molecules, the mRNA and conformational changes in the ribosome. This chain is Elongation factor G, found in Gloeobacter violaceus (strain ATCC 29082 / PCC 7421).